We begin with the raw amino-acid sequence, 304 residues long: Glycine--tRNA ligase alpha subunit (304 aa).

Belongs to the class-II aminoacyl-tRNA synthetase family. As to quaternary structure, tetramer of two alpha and two beta subunits.

The protein resides in the cytoplasm. It catalyses the reaction tRNA(Gly) + glycine + ATP = glycyl-tRNA(Gly) + AMP + diphosphate. This chain is Glycine--tRNA ligase alpha subunit, found in Tolumonas auensis (strain DSM 9187 / NBRC 110442 / TA 4).